A 135-amino-acid polypeptide reads, in one-letter code: Photosystem II extrinsic protein U (135 aa).

Positions 1–26 (MKNLVRLLAVIALIIGSFWGKVPAQA) are cleaved as a signal peptide.

It belongs to the PsbU family. In terms of assembly, PSII is composed of 1 copy each of membrane proteins PsbA, PsbB, PsbC, PsbD, PsbE, PsbF, PsbH, PsbI, PsbJ, PsbK, PsbL, PsbM, PsbT, PsbX, PsbY, PsbZ, Psb30/Ycf12, peripheral proteins PsbO, CyanoQ (PsbQ), PsbU, PsbV and a large number of cofactors. It forms dimeric complexes.

Its subcellular location is the cellular thylakoid membrane. In terms of biological role, one of the extrinsic, lumenal subunits of photosystem II (PSII). PSII is a light-driven water plastoquinone oxidoreductase, using light energy to abstract electrons from H(2)O, generating a proton gradient subsequently used for ATP formation. The extrinsic proteins stabilize the structure of photosystem II oxygen-evolving complex (OEC), the ion environment of oxygen evolution and protect the OEC against heat-induced inactivation. This is Photosystem II extrinsic protein U from Microcystis aeruginosa (strain NIES-843 / IAM M-2473).